Consider the following 168-residue polypeptide: CASP-like protein 4D1 (168 aa).

The Cytoplasmic portion of the chain corresponds to 1 to 11; it reads MAPPPPSLASR. Residues 12-32 form a helical membrane-spanning segment; sequence MAALILRILTFIFLIASLVIL. The Extracellular portion of the chain corresponds to 33 to 57; that stretch reads TTNTATLELDLVEVKVHFKDVYAYR. The helical transmembrane segment at 58 to 78 threads the bilayer; it reads YMLATIVIGLAYTVLQIAFTL. Over 79-97 the chain is Cytoplasmic; sequence YYVATGNRMMSGDGNLAFD. Residues 98 to 118 traverse the membrane as a helical segment; that stretch reads FFGDKVISYILVTGAAAGFAS. The Extracellular segment spans residues 119-144; that stretch reads TKDIKPVFSGSGDFDAFINKGYASAS. A helical transmembrane segment spans residues 145–165; that stretch reads LLLIGFVCTAVLSVFSSYALP. Residues 166-168 lie on the Cytoplasmic side of the membrane; the sequence is KQV.

It belongs to the Casparian strip membrane proteins (CASP) family. As to quaternary structure, homodimer and heterodimers.

Its subcellular location is the cell membrane. In Ricinus communis (Castor bean), this protein is CASP-like protein 4D1.